The sequence spans 441 residues: Ribosomal protein uS12 methylthiotransferase RimO (441 aa).

The MTTase N-terminal domain maps to Pro-8 to Pro-118. Cys-17, Cys-53, Cys-82, Cys-150, Cys-154, and Cys-157 together coordinate [4Fe-4S] cluster. Residues Leu-136–Glu-373 enclose the Radical SAM core domain. A TRAM domain is found at Gln-376–Val-441.

It belongs to the methylthiotransferase family. RimO subfamily. The cofactor is [4Fe-4S] cluster.

Its subcellular location is the cytoplasm. It catalyses the reaction L-aspartate(89)-[ribosomal protein uS12]-hydrogen + (sulfur carrier)-SH + AH2 + 2 S-adenosyl-L-methionine = 3-methylsulfanyl-L-aspartate(89)-[ribosomal protein uS12]-hydrogen + (sulfur carrier)-H + 5'-deoxyadenosine + L-methionine + A + S-adenosyl-L-homocysteine + 2 H(+). Its function is as follows. Catalyzes the methylthiolation of an aspartic acid residue of ribosomal protein uS12. This chain is Ribosomal protein uS12 methylthiotransferase RimO, found in Escherichia fergusonii (strain ATCC 35469 / DSM 13698 / CCUG 18766 / IAM 14443 / JCM 21226 / LMG 7866 / NBRC 102419 / NCTC 12128 / CDC 0568-73).